A 289-amino-acid chain; its full sequence is ATP synthase gamma chain (289 aa).

Belongs to the ATPase gamma chain family. As to quaternary structure, F-type ATPases have 2 components, CF(1) - the catalytic core - and CF(0) - the membrane proton channel. CF(1) has five subunits: alpha(3), beta(3), gamma(1), delta(1), epsilon(1). CF(0) has three main subunits: a, b and c.

Its subcellular location is the cell inner membrane. Functionally, produces ATP from ADP in the presence of a proton gradient across the membrane. The gamma chain is believed to be important in regulating ATPase activity and the flow of protons through the CF(0) complex. This chain is ATP synthase gamma chain, found in Azorhizobium caulinodans (strain ATCC 43989 / DSM 5975 / JCM 20966 / LMG 6465 / NBRC 14845 / NCIMB 13405 / ORS 571).